The sequence spans 479 residues: MNQDSGCEGVGEVVRVMPAVVDVEFAHGGLPDILHALKSEKDYQGKQLVLEVAQHLGDGVVRCVAMGSTDGLSRGDKFINTGSPISVPVGRKTLGRVFDVLGEPIDGVGDVGADVEYHSIHAHAPKLSEQKVATEVLVTGIKVIDLLAPYLKGGKVGLFGGAGVGKTVLIMELISNIARAHKGFSVFAGVGERTREGNDLYREMVESGVINEDEREKSQAVLVYGQMNEPPGARMRVALSALTMAEYFRDAEGQDVLFFVDNVFRFTQSGSEVSALLGRVPSAVGYQPTLASEMGAMQERITSTHKGSITSVQAIYVPADDLTDPAPSTSFLHLDSTTVLSRQISELGIYPAVDPLDSTSQALSVDVVGAEHYEVAREVQRILQTYKSLQDIIAILGMDELSQEDKILVARARKIQRFLSQPFHVAEVFTGNPGVFVSLEDTVRSFKGLVEGQYDDLPEAAFYMVGGIDAAVEKAKALK.

160–167 is an ATP binding site; sequence GGAGVGKT.

The protein belongs to the ATPase alpha/beta chains family. As to quaternary structure, F-type ATPases have 2 components, CF(1) - the catalytic core - and CF(0) - the membrane proton channel. CF(1) has five subunits: alpha(3), beta(3), gamma(1), delta(1), epsilon(1). CF(0) has three main subunits: a(1), b(2) and c(9-12). The alpha and beta chains form an alternating ring which encloses part of the gamma chain. CF(1) is attached to CF(0) by a central stalk formed by the gamma and epsilon chains, while a peripheral stalk is formed by the delta and b chains.

It localises to the cell inner membrane. It carries out the reaction ATP + H2O + 4 H(+)(in) = ADP + phosphate + 5 H(+)(out). Functionally, produces ATP from ADP in the presence of a proton gradient across the membrane. The catalytic sites are hosted primarily by the beta subunits. The polypeptide is ATP synthase subunit beta (Anaplasma phagocytophilum (strain HZ)).